We begin with the raw amino-acid sequence, 272 residues long: ATP synthase subunit a (272 aa).

7 helical membrane-spanning segments follow: residues 39 to 59 (GFWA…LIFI), 103 to 123 (VAPL…LKWI), 124 to 144 (PVDY…KIVP), 152 to 172 (FGIS…VKGV), 181 to 201 (FTPF…IIGL), 221 to 241 (VVFI…NVPW), and 242 to 262 (AIFH…LTVV).

This sequence belongs to the ATPase A chain family. In terms of assembly, F-type ATPases have 2 components, CF(1) - the catalytic core - and CF(0) - the membrane proton channel. CF(1) has five subunits: alpha(3), beta(3), gamma(1), delta(1), epsilon(1). CF(0) has three main subunits: a(1), b(2) and c(9-12). The alpha and beta chains form an alternating ring which encloses part of the gamma chain. CF(1) is attached to CF(0) by a central stalk formed by the gamma and epsilon chains, while a peripheral stalk is formed by the delta and b chains.

It localises to the cell inner membrane. In terms of biological role, key component of the proton channel; it plays a direct role in the translocation of protons across the membrane. The polypeptide is ATP synthase subunit a (Ectopseudomonas mendocina (strain ymp) (Pseudomonas mendocina)).